Reading from the N-terminus, the 551-residue chain is CTP synthase (551 aa).

An amidoligase domain region spans residues 1-267 (MSGTKYIFVT…DALVLEKLGL (267 aa)). CTP is bound at residue serine 15. Position 15 (serine 15) interacts with UTP. 16 to 21 (SIGKGT) serves as a coordination point for ATP. Tyrosine 56 contributes to the L-glutamine binding site. Residue aspartate 73 participates in ATP binding. Residues aspartate 73 and glutamate 141 each contribute to the Mg(2+) site. Residues 148–150 (DIE), 188–193 (KTKPTQ), and lysine 224 each bind CTP. UTP contacts are provided by residues 188–193 (KTKPTQ) and lysine 224. Positions 292 to 534 (RVAVIGKYIR…VGACLGAAEE (243 aa)) constitute a Glutamine amidotransferase type-1 domain. Position 355 (glycine 355) interacts with L-glutamine. The active-site Nucleophile; for glutamine hydrolysis is cysteine 382. L-glutamine is bound by residues 383-386 (LGMQ), glutamate 406, and arginine 462. Residues histidine 507 and glutamate 509 contribute to the active site.

The protein belongs to the CTP synthase family. Homotetramer.

It catalyses the reaction UTP + L-glutamine + ATP + H2O = CTP + L-glutamate + ADP + phosphate + 2 H(+). The enzyme catalyses L-glutamine + H2O = L-glutamate + NH4(+). It carries out the reaction UTP + NH4(+) + ATP = CTP + ADP + phosphate + 2 H(+). It functions in the pathway pyrimidine metabolism; CTP biosynthesis via de novo pathway; CTP from UDP: step 2/2. Allosterically activated by GTP, when glutamine is the substrate; GTP has no effect on the reaction when ammonia is the substrate. The allosteric effector GTP functions by stabilizing the protein conformation that binds the tetrahedral intermediate(s) formed during glutamine hydrolysis. Inhibited by the product CTP, via allosteric rather than competitive inhibition. Functionally, catalyzes the ATP-dependent amination of UTP to CTP with either L-glutamine or ammonia as the source of nitrogen. Regulates intracellular CTP levels through interactions with the four ribonucleotide triphosphates. This chain is CTP synthase, found in Rubrobacter xylanophilus (strain DSM 9941 / JCM 11954 / NBRC 16129 / PRD-1).